The sequence spans 191 residues: MRGVVGVLALQGDFREHKEALKRLGIEAKEVRKKEHLEGLKALIVPGGESTTIGKLAREYGIEDEVRKRVEEGSLALFGTCAGAIWLAKEIVGYPEQPRLGVLEAWVERNAFGRQVESFEEDLEVEGLGSFHGVFIRAPVFRRLGEGVEVLARLGDLPVLVRQGKVLASSFHPELTEDPRLHRYFLELAGV.

Gly-48–Ser-50 lines the L-glutamine pocket. Cys-81 acts as the Nucleophile in catalysis. Residues Arg-109 and Ile-136–Arg-137 each bind L-glutamine. Catalysis depends on charge relay system residues His-172 and Glu-174.

This sequence belongs to the glutaminase PdxT/SNO family. As to quaternary structure, in the presence of PdxS, forms a dodecamer of heterodimers. Only shows activity in the heterodimer.

It catalyses the reaction aldehydo-D-ribose 5-phosphate + D-glyceraldehyde 3-phosphate + L-glutamine = pyridoxal 5'-phosphate + L-glutamate + phosphate + 3 H2O + H(+). The catalysed reaction is L-glutamine + H2O = L-glutamate + NH4(+). It participates in cofactor biosynthesis; pyridoxal 5'-phosphate biosynthesis. Its function is as follows. Catalyzes the hydrolysis of glutamine to glutamate and ammonia as part of the biosynthesis of pyridoxal 5'-phosphate. The resulting ammonia molecule is channeled to the active site of PdxS. The polypeptide is Pyridoxal 5'-phosphate synthase subunit PdxT (Thermus thermophilus (strain ATCC 27634 / DSM 579 / HB8)).